Reading from the N-terminus, the 634-residue chain is 1-deoxy-D-xylulose-5-phosphate synthase (634 aa).

Residues histidine 74 and 115 to 117 contribute to the thiamine diphosphate site; that span reads AHS. Aspartate 146 is a binding site for Mg(2+). Residues 147-148, asparagine 176, tyrosine 283, and glutamate 365 contribute to the thiamine diphosphate site; that span reads GA. Asparagine 176 provides a ligand contact to Mg(2+).

The protein belongs to the transketolase family. DXPS subfamily. As to quaternary structure, homodimer. Requires Mg(2+) as cofactor. The cofactor is thiamine diphosphate.

It carries out the reaction D-glyceraldehyde 3-phosphate + pyruvate + H(+) = 1-deoxy-D-xylulose 5-phosphate + CO2. It functions in the pathway metabolic intermediate biosynthesis; 1-deoxy-D-xylulose 5-phosphate biosynthesis; 1-deoxy-D-xylulose 5-phosphate from D-glyceraldehyde 3-phosphate and pyruvate: step 1/1. Its function is as follows. Catalyzes the acyloin condensation reaction between C atoms 2 and 3 of pyruvate and glyceraldehyde 3-phosphate to yield 1-deoxy-D-xylulose-5-phosphate (DXP). The polypeptide is 1-deoxy-D-xylulose-5-phosphate synthase (Burkholderia thailandensis (strain ATCC 700388 / DSM 13276 / CCUG 48851 / CIP 106301 / E264)).